A 224-amino-acid polypeptide reads, in one-letter code: Imidazoleglycerol-phosphate dehydratase (224 aa).

The protein belongs to the imidazoleglycerol-phosphate dehydratase family.

It carries out the reaction D-erythro-1-(imidazol-4-yl)glycerol 3-phosphate = 3-(imidazol-4-yl)-2-oxopropyl phosphate + H2O. It functions in the pathway amino-acid biosynthesis; L-histidine biosynthesis; L-histidine from 5-phospho-alpha-D-ribose 1-diphosphate: step 6/9. In Komagataella pastoris (Yeast), this protein is Imidazoleglycerol-phosphate dehydratase (HIS3).